Consider the following 37-residue polypeptide: MVETLLSGIVLGLIPITLVGLFVTAYLQYRRGDQLDI.

The helical transmembrane segment at 5 to 25 threads the bilayer; sequence LLSGIVLGLIPITLVGLFVTA.

The protein belongs to the PetG family. As to quaternary structure, the 4 large subunits of the cytochrome b6-f complex are cytochrome b6, subunit IV (17 kDa polypeptide, PetD), cytochrome f and the Rieske protein, while the 4 small subunits are PetG, PetL, PetM and PetN. The complex functions as a dimer.

The protein resides in the plastid. It is found in the chloroplast thylakoid membrane. Functionally, component of the cytochrome b6-f complex, which mediates electron transfer between photosystem II (PSII) and photosystem I (PSI), cyclic electron flow around PSI, and state transitions. PetG is required for either the stability or assembly of the cytochrome b6-f complex. This Welwitschia mirabilis (Tree tumbo) protein is Cytochrome b6-f complex subunit 5.